A 235-amino-acid chain; its full sequence is Segregation and condensation protein A (235 aa).

Belongs to the ScpA family. As to quaternary structure, component of a cohesin-like complex composed of ScpA, ScpB and the Smc homodimer, in which ScpA and ScpB bind to the head domain of Smc. The presence of the three proteins is required for the association of the complex with DNA.

The protein localises to the cytoplasm. Participates in chromosomal partition during cell division. May act via the formation of a condensin-like complex containing Smc and ScpB that pull DNA away from mid-cell into both cell halves. The protein is Segregation and condensation protein A of Streptococcus agalactiae serotype III (strain NEM316).